We begin with the raw amino-acid sequence, 130 residues long: Small ribosomal subunit protein uS9 (130 aa).

It belongs to the universal ribosomal protein uS9 family.

The sequence is that of Small ribosomal subunit protein uS9 from Saccharophagus degradans (strain 2-40 / ATCC 43961 / DSM 17024).